The following is a 471-amino-acid chain: Siroheme synthase (471 aa).

Residues 1 to 203 (MDYLPLFADI…GDWESAEKTL (203 aa)) form a precorrin-2 dehydrogenase /sirohydrochlorin ferrochelatase region. NAD(+) is bound by residues 22-23 (EV) and 43-44 (KN). Residue Ser128 is modified to Phosphoserine. Positions 215 to 471 (GEIILVGAGP…DTKSSLINLA (257 aa)) are uroporphyrinogen-III C-methyltransferase. Position 224 (Pro224) interacts with S-adenosyl-L-methionine. Catalysis depends on Asp247, which acts as the Proton acceptor. The active-site Proton donor is Lys269. S-adenosyl-L-methionine-binding positions include 300-302 (GGD), Ile305, 330-331 (TA), Met382, and Ala411.

It in the N-terminal section; belongs to the precorrin-2 dehydrogenase / sirohydrochlorin ferrochelatase family. This sequence in the C-terminal section; belongs to the precorrin methyltransferase family.

It catalyses the reaction uroporphyrinogen III + 2 S-adenosyl-L-methionine = precorrin-2 + 2 S-adenosyl-L-homocysteine + H(+). It carries out the reaction precorrin-2 + NAD(+) = sirohydrochlorin + NADH + 2 H(+). The catalysed reaction is siroheme + 2 H(+) = sirohydrochlorin + Fe(2+). Its pathway is cofactor biosynthesis; adenosylcobalamin biosynthesis; precorrin-2 from uroporphyrinogen III: step 1/1. The protein operates within cofactor biosynthesis; adenosylcobalamin biosynthesis; sirohydrochlorin from precorrin-2: step 1/1. It functions in the pathway porphyrin-containing compound metabolism; siroheme biosynthesis; precorrin-2 from uroporphyrinogen III: step 1/1. It participates in porphyrin-containing compound metabolism; siroheme biosynthesis; siroheme from sirohydrochlorin: step 1/1. Its pathway is porphyrin-containing compound metabolism; siroheme biosynthesis; sirohydrochlorin from precorrin-2: step 1/1. Multifunctional enzyme that catalyzes the SAM-dependent methylations of uroporphyrinogen III at position C-2 and C-7 to form precorrin-2 via precorrin-1. Then it catalyzes the NAD-dependent ring dehydrogenation of precorrin-2 to yield sirohydrochlorin. Finally, it catalyzes the ferrochelation of sirohydrochlorin to yield siroheme. This is Siroheme synthase from Zymomonas mobilis subsp. mobilis (strain ATCC 31821 / ZM4 / CP4).